The primary structure comprises 124 residues: Small ribosomal subunit protein bS6m (124 aa).

This sequence belongs to the bacterial ribosomal protein bS6 family. As to quaternary structure, component of the mitochondrial ribosome small subunit (28S) which comprises a 12S rRNA and about 30 distinct proteins.

It is found in the mitochondrion. The chain is Small ribosomal subunit protein bS6m (MRPS6) from Bos taurus (Bovine).